The chain runs to 661 residues: UvrABC system protein C (661 aa).

The region spanning 25-104 (AEPGCYLMRD…IKNHQPHFNV (80 aa)) is the GIY-YIG domain. Residues 214–249 (DELQHLLQEQMERYAERMDYESAARVRDQLQGLDQL) enclose the UVR domain. The span at 636-652 (FFHPSDEGTDADARAAL) shows a compositional bias: basic and acidic residues. The tract at residues 636–661 (FFHPSDEGTDADARAALEEQPQELSA) is disordered.

The protein belongs to the UvrC family. Interacts with UvrB in an incision complex.

The protein localises to the cytoplasm. Functionally, the UvrABC repair system catalyzes the recognition and processing of DNA lesions. UvrC both incises the 5' and 3' sides of the lesion. The N-terminal half is responsible for the 3' incision and the C-terminal half is responsible for the 5' incision. In Synechococcus sp. (strain CC9605), this protein is UvrABC system protein C.